The following is a 380-amino-acid chain: Homoserine O-succinyltransferase (380 aa).

Positions 49-357 constitute an AB hydrolase-1 domain; that stretch reads NAILICHALS…ESTHGHDAFL (309 aa). Residue Ser-155 is the Nucleophile of the active site. Residue Arg-225 participates in substrate binding. Active-site residues include Asp-320 and His-353. Residue Asp-354 coordinates substrate.

Belongs to the AB hydrolase superfamily. MetX family. As to quaternary structure, homodimer.

Its subcellular location is the cytoplasm. It carries out the reaction L-homoserine + succinyl-CoA = O-succinyl-L-homoserine + CoA. It functions in the pathway amino-acid biosynthesis; L-methionine biosynthesis via de novo pathway; O-succinyl-L-homoserine from L-homoserine: step 1/1. Functionally, transfers a succinyl group from succinyl-CoA to L-homoserine, forming succinyl-L-homoserine. The polypeptide is Homoserine O-succinyltransferase (Laribacter hongkongensis (strain HLHK9)).